The following is a 144-amino-acid chain: Large ribosomal subunit protein uL16 (144 aa).

Belongs to the universal ribosomal protein uL16 family. In terms of assembly, part of the 50S ribosomal subunit.

Functionally, binds 23S rRNA and is also seen to make contacts with the A and possibly P site tRNAs. This is Large ribosomal subunit protein uL16 from Halalkalibacterium halodurans (strain ATCC BAA-125 / DSM 18197 / FERM 7344 / JCM 9153 / C-125) (Bacillus halodurans).